The primary structure comprises 213 residues: Uridine kinase (213 aa).

15–22 (GASASGKS) lines the ATP pocket.

It belongs to the uridine kinase family.

The protein localises to the cytoplasm. The catalysed reaction is uridine + ATP = UMP + ADP + H(+). The enzyme catalyses cytidine + ATP = CMP + ADP + H(+). The protein operates within pyrimidine metabolism; CTP biosynthesis via salvage pathway; CTP from cytidine: step 1/3. It participates in pyrimidine metabolism; UMP biosynthesis via salvage pathway; UMP from uridine: step 1/1. The sequence is that of Uridine kinase from Cronobacter sakazakii (strain ATCC BAA-894) (Enterobacter sakazakii).